Consider the following 583-residue polypeptide: Sensor protein SrrB (583 aa).

The Cytoplasmic portion of the chain corresponds to 1–11; it reads MMSRLNSVVIK. Residues 12-32 traverse the membrane as a helical segment; the sequence is LWLTIILIVTTVLILLSIALI. Over 33-174 the chain is Extracellular; the sequence is TFMQYYFTQE…SIEDTNNAIT (142 aa). The chain crosses the membrane as a helical span at residues 175 to 195; that stretch reads IITIITAVIFLTITTVFAFFL. Residues 196 to 583 lie on the Cytoplasmic side of the membrane; that stretch reads SSRITKPLRR…TFIIKLPKPE (388 aa). In terms of domain architecture, HAMP spans 197-249; that stretch reads SRITKPLRRLRDQATRVSEGDYSYKPSVTTKDEIGQLSQAFNQMSTEIEEHVD. The region spanning 366–583 is the Histidine kinase domain; that stretch reads NVSHELRTPI…TFIIKLPKPE (218 aa). Histidine 369 bears the Phosphohistidine; by autocatalysis mark.

Its subcellular location is the cell membrane. The catalysed reaction is ATP + protein L-histidine = ADP + protein N-phospho-L-histidine.. Functionally, member of the two-component regulatory system SrrA/SrrB, which is involved in the global regulation of staphylococcal virulence factors in response to environmental oxygen levels as well as biofilm formation. Also plays an essential role in host-derived nitric oxide resistance by regulating hmp/flavohemoglobin, an enzyme that detoxifies nitric oxide by converting it to nitrate. Functions as a sensor protein kinase which is autophosphorylated at a histidine residue and transfers its phosphate group to SrrA. In turn, SrrA binds to the upstream promoter regions of the target genes to positively and negatively regulate their expression. The sequence is that of Sensor protein SrrB (srrB) from Staphylococcus aureus (strain Mu50 / ATCC 700699).